Consider the following 492-residue polypeptide: Forkhead box protein O6 (492 aa).

Disordered stretches follow at residues 1–76, 163–235, 315–338, and 466–492; these read MAAK…EVGP, SWWM…ASPA, GAGL…APRP, and FNFD…WVPG. Residues 88–182 constitute a DNA-binding region (fork-head); sequence WGNLSYADLI…KTGKTPRRRA (95 aa). Serine 184 is subject to Phosphoserine. Positions 192-203 are enriched in basic residues; sequence LRIKGKASKKKQ. A compositionally biased stretch (low complexity) spans 225 to 235; sequence PAAAKWAASPA. Residues 472 to 486 show a composition bias toward pro residues; it reads LPPPPPGLAGAPPPN.

Phosphorylation of Ser-184 is be important in regulating the transacriptional activity.

The protein localises to the cytoplasm. It localises to the nucleus. In terms of biological role, transcriptional activator. This chain is Forkhead box protein O6 (FOXO6), found in Homo sapiens (Human).